A 144-amino-acid polypeptide reads, in one-letter code: MSQSPIQNPTSDPNAQSVQETSESKYGERQIAEGTLITFPNPRVGRRYDIHITLPEFTCKCPFSGYPDFATIHLTYVPDQRVVELKALKLYINSYRDRYISHEESVNQILDDIVAACDPLEITVKGDFLPRGNVHTVIEVHHQK.

A compositionally biased stretch (polar residues) spans 1-21 (MSQSPIQNPTSDPNAQSVQET). Positions 1–27 (MSQSPIQNPTSDPNAQSVQETSESKYG) are disordered. The Thioimide intermediate role is filled by cysteine 61. Aspartate 68 acts as the Proton donor in catalysis. Substrate contacts are provided by residues 83–85 (VEL) and 102–103 (HE).

This sequence belongs to the GTP cyclohydrolase I family. QueF type 1 subfamily.

The protein localises to the cytoplasm. The enzyme catalyses 7-aminomethyl-7-carbaguanine + 2 NADP(+) = 7-cyano-7-deazaguanine + 2 NADPH + 3 H(+). It participates in tRNA modification; tRNA-queuosine biosynthesis. Catalyzes the NADPH-dependent reduction of 7-cyano-7-deazaguanine (preQ0) to 7-aminomethyl-7-deazaguanine (preQ1). The polypeptide is NADPH-dependent 7-cyano-7-deazaguanine reductase (Acaryochloris marina (strain MBIC 11017)).